We begin with the raw amino-acid sequence, 948 residues long: Probable DNA-directed RNA polymerase (948 aa).

Catalysis depends on residues aspartate 600, lysine 680, and aspartate 853.

Belongs to the phage and mitochondrial RNA polymerase family.

The protein localises to the mitochondrion. The catalysed reaction is RNA(n) + a ribonucleoside 5'-triphosphate = RNA(n+1) + diphosphate. Its function is as follows. DNA-dependent RNA polymerase catalyzes the transcription of DNA into RNA using the four ribonucleoside triphosphates as substrates. The polypeptide is Probable DNA-directed RNA polymerase (Podospora anserina (Pleurage anserina)).